A 174-amino-acid polypeptide reads, in one-letter code: MGKITFYEDRGFQGRCYECSSDHVNLQSYFSRCNSIRVDSGCWMIYERPNYSGYQYYLRRGEYPDYQDWMGFNDSIKSCRIIPYSGSHKMRLYEREDYKGQMMELTDDCSCVQDRFHLNEIHSLNVLDGCWILYEMPNYRGRQFLLRPGEYRRYLDWGAMNAKVGSLRRVIDVY.

2 Beta/gamma crystallin 'Greek key' domains span residues 2 to 40 (GKIT…RVDS) and 41 to 83 (GCWM…RIIP). The connecting peptide stretch occupies residues 84-87 (YSGS). Beta/gamma crystallin 'Greek key' domains are found at residues 88 to 128 (HKMR…NVLD) and 129 to 171 (GCWI…RRVI).

It belongs to the beta/gamma-crystallin family. As to quaternary structure, monomer.

In terms of biological role, crystallins are the dominant structural components of the vertebrate eye lens. This chain is Gamma-crystallin D (CRYGD), found in Macropus fuliginosus (Western gray kangaroo).